Here is a 387-residue protein sequence, read N- to C-terminus: UPF0400 protein C337.03 (387 aa).

The region spanning 1–133 (MALTPDTVSS…SLQERFNNAE (133 aa)) is the CID domain. Positions 177 to 255 (KSYLEKQSDY…IISNLENKES (79 aa)) form a coiled coil. The tract at residues 257–387 (TATSTLTDAG…SSAAGLYGDS (131 aa)) is disordered. Low complexity predominate over residues 283–297 (SPPSSSPNSDDAYSP). Positions 298–323 (QVDSYSPSINSVPYTSNIVENPSEDN) are enriched in polar residues. The span at 353–365 (NEEESKELPEDSD) shows a compositional bias: acidic residues. Residues 370–379 (DSSPSSDDSS) are compositionally biased toward low complexity. A Phosphoserine modification is found at S372.

Belongs to the UPF0400 (RTT103) family.

The chain is UPF0400 protein C337.03 from Schizosaccharomyces pombe (strain 972 / ATCC 24843) (Fission yeast).